The chain runs to 1033 residues: Isoleucine--tRNA ligase 2 (1033 aa).

Positions 47 to 57 match the 'HIGH' region motif; sequence PTANGLPHVGH. Residues 590 to 594 carry the 'KMSKS' region motif; that stretch reads KMSKS. Lys593 is a binding site for ATP.

The protein belongs to the class-I aminoacyl-tRNA synthetase family. IleS type 2 subfamily. As to quaternary structure, monomer. Zn(2+) serves as cofactor.

The protein localises to the cytoplasm. The catalysed reaction is tRNA(Ile) + L-isoleucine + ATP = L-isoleucyl-tRNA(Ile) + AMP + diphosphate. Catalyzes the attachment of isoleucine to tRNA(Ile). As IleRS can inadvertently accommodate and process structurally similar amino acids such as valine, to avoid such errors it has two additional distinct tRNA(Ile)-dependent editing activities. One activity is designated as 'pretransfer' editing and involves the hydrolysis of activated Val-AMP. The other activity is designated 'posttransfer' editing and involves deacylation of mischarged Val-tRNA(Ile). The sequence is that of Isoleucine--tRNA ligase 2 from Bacillus cereus (strain ATCC 14579 / DSM 31 / CCUG 7414 / JCM 2152 / NBRC 15305 / NCIMB 9373 / NCTC 2599 / NRRL B-3711).